Consider the following 147-residue polypeptide: UPF0735 ACT domain-containing protein YszB (147 aa).

An ACT domain is found at 70–145 (TLFFHLEDRS…FVEKVEILGS (76 aa)).

It belongs to the UPF0735 family.

This Bacillus subtilis (strain 168) protein is UPF0735 ACT domain-containing protein YszB (yszB).